Reading from the N-terminus, the 480-residue chain is tRNA-2-methylthio-N(6)-dimethylallyladenosine synthase (480 aa).

The MTTase N-terminal domain occupies 2–118 (NRVHIKTYGC…VPGYLDNLRA (117 aa)). Positions 11, 47, and 81 each coordinate [4Fe-4S] cluster. Positions 145–169 (DHLLPQDSDSDSQPSTLNSQLRGAA) are disordered. Low complexity predominate over residues 149–159 (PQDSDSDSQPS). Positions 171-405 (PPPQITAFVS…LELLRQNSER (235 aa)) constitute a Radical SAM core domain. [4Fe-4S] cluster contacts are provided by Cys185, Cys189, and Cys192. The region spanning 408 to 470 (ALLLDTVEEV…VSTLYGELML (63 aa)) is the TRAM domain.

It belongs to the methylthiotransferase family. MiaB subfamily. In terms of assembly, monomer. [4Fe-4S] cluster serves as cofactor.

It localises to the cytoplasm. It carries out the reaction N(6)-dimethylallyladenosine(37) in tRNA + (sulfur carrier)-SH + AH2 + 2 S-adenosyl-L-methionine = 2-methylsulfanyl-N(6)-dimethylallyladenosine(37) in tRNA + (sulfur carrier)-H + 5'-deoxyadenosine + L-methionine + A + S-adenosyl-L-homocysteine + 2 H(+). Functionally, catalyzes the methylthiolation of N6-(dimethylallyl)adenosine (i(6)A), leading to the formation of 2-methylthio-N6-(dimethylallyl)adenosine (ms(2)i(6)A) at position 37 in tRNAs that read codons beginning with uridine. The protein is tRNA-2-methylthio-N(6)-dimethylallyladenosine synthase of Opitutus terrae (strain DSM 11246 / JCM 15787 / PB90-1).